Here is a 692-residue protein sequence, read N- to C-terminus: Elongation factor G (692 aa).

One can recognise a tr-type G domain in the interval 8-283; it reads NRIRNIGIAA…AVIDYLPAPT (276 aa). GTP is bound by residues 17-24, 81-85, and 135-138; these read AHIDAGKT, DTPGH, and NKMD.

The protein belongs to the TRAFAC class translation factor GTPase superfamily. Classic translation factor GTPase family. EF-G/EF-2 subfamily.

The protein resides in the cytoplasm. Catalyzes the GTP-dependent ribosomal translocation step during translation elongation. During this step, the ribosome changes from the pre-translocational (PRE) to the post-translocational (POST) state as the newly formed A-site-bound peptidyl-tRNA and P-site-bound deacylated tRNA move to the P and E sites, respectively. Catalyzes the coordinated movement of the two tRNA molecules, the mRNA and conformational changes in the ribosome. The sequence is that of Elongation factor G (fusA) from Helicobacter pylori (strain ATCC 700392 / 26695) (Campylobacter pylori).